The chain runs to 140 residues: UPF0225 protein SAV_6631 (140 aa).

Positions 1 to 22 are disordered; it reads MSKSRRTRSTSRPTSRPQPASC. A compositionally biased stretch (low complexity) spans 10 to 19; sequence TSRPTSRPQP.

It belongs to the UPF0225 family.

The chain is UPF0225 protein SAV_6631 from Streptomyces avermitilis (strain ATCC 31267 / DSM 46492 / JCM 5070 / NBRC 14893 / NCIMB 12804 / NRRL 8165 / MA-4680).